We begin with the raw amino-acid sequence, 218 residues long: THAP domain-containing protein 3 (218 aa).

The segment at 1–82 (MPKSCAARQC…LKHNAVPTVF (82 aa)) adopts a THAP-type zinc-finger fold. Disordered stretches follow at residues 97–120 (GGDSSGRNMDTTLEELQPPTPEGP) and 133–154 (ATEAAGLPASPLGLKRPLPGQP). Residue Ser100 is modified to Phosphoserine. Positions 156-159 (DHSY) match the HCFC1-binding motif (HBM) motif.

Component of a THAP1/THAP3-HCFC1-OGT complex that contains at least, either THAP1 or THAP3, HCFC1 and OGT. Interacts directly with OGT and HCFC1 (via its HBM). Highest levels in heart, liver and kidney. Lower levels in brain and lung.

Functionally, component of a THAP1/THAP3-HCFC1-OGT complex that is required for the regulation of the transcriptional activity of RRM1. This chain is THAP domain-containing protein 3 (Thap3), found in Mus musculus (Mouse).